The chain runs to 194 residues: Der GTPase-activating protein YihI (194 aa).

The disordered stretch occupies residues 1–81; it reads MSRSKKTRRI…AKVKKDPRVG (81 aa). Composition is skewed to basic and acidic residues over residues 9–23 and 36–47; these read RISD…DKKP and TRYELDVQAREE. Positions 59-70 are enriched in polar residues; it reads GSRNVITEQKTA.

The protein belongs to the YihI family. In terms of assembly, interacts with Der.

A GTPase-activating protein (GAP) that modifies Der/EngA GTPase function. May play a role in ribosome biogenesis. This chain is Der GTPase-activating protein YihI, found in Haemophilus ducreyi (strain 35000HP / ATCC 700724).